The chain runs to 871 residues: Protein translocase subunit SecA (871 aa).

Residues Q80, 98–102, and D537 contribute to the ATP site; that span reads GEGKT. The disordered stretch occupies residues 852–871; it reads MEKGKKKGGSHGLGKIRVKR. Over residues 855 to 871 the composition is skewed to basic residues; it reads GKKKGGSHGLGKIRVKR.

The protein belongs to the SecA family. In terms of assembly, monomer and homodimer. Part of the essential Sec protein translocation apparatus which comprises SecA, SecYEG and auxiliary proteins SecDF. Other proteins may also be involved.

The protein resides in the cell inner membrane. Its subcellular location is the cytoplasm. It catalyses the reaction ATP + H2O + cellular proteinSide 1 = ADP + phosphate + cellular proteinSide 2.. Its function is as follows. Part of the Sec protein translocase complex. Interacts with the SecYEG preprotein conducting channel. Has a central role in coupling the hydrolysis of ATP to the transfer of proteins into and across the cell membrane, serving as an ATP-driven molecular motor driving the stepwise translocation of polypeptide chains across the membrane. The protein is Protein translocase subunit SecA of Thermotoga neapolitana (strain ATCC 49049 / DSM 4359 / NBRC 107923 / NS-E).